A 315-amino-acid chain; its full sequence is Aspartate carbamoyltransferase catalytic subunit (315 aa).

Carbamoyl phosphate contacts are provided by arginine 65 and threonine 66. Lysine 93 is a binding site for L-aspartate. Residues arginine 115, histidine 145, and glutamine 148 each contribute to the carbamoyl phosphate site. L-aspartate-binding residues include arginine 179 and arginine 234. Glycine 275 and proline 276 together coordinate carbamoyl phosphate.

It belongs to the aspartate/ornithine carbamoyltransferase superfamily. ATCase family. In terms of assembly, heterododecamer (2C3:3R2) of six catalytic PyrB chains organized as two trimers (C3), and six regulatory PyrI chains organized as three dimers (R2).

The enzyme catalyses carbamoyl phosphate + L-aspartate = N-carbamoyl-L-aspartate + phosphate + H(+). Its pathway is pyrimidine metabolism; UMP biosynthesis via de novo pathway; (S)-dihydroorotate from bicarbonate: step 2/3. Its function is as follows. Catalyzes the condensation of carbamoyl phosphate and aspartate to form carbamoyl aspartate and inorganic phosphate, the committed step in the de novo pyrimidine nucleotide biosynthesis pathway. This chain is Aspartate carbamoyltransferase catalytic subunit, found in Xanthomonas oryzae pv. oryzae (strain MAFF 311018).